The sequence spans 82 residues: Sec-independent protein translocase protein TatA (82 aa).

The chain crosses the membrane as a helical span at residues 1–21; that stretch reads MGSFSIWHWLIVLLIVVMVFG. The interval 46–82 is disordered; that stretch reads GASTDDSATTSAPAGQVTNNSTAADKTTIDVEAKHKS. Over residues 49–70 the composition is skewed to polar residues; it reads TDDSATTSAPAGQVTNNSTAAD. Residues 72-82 show a composition bias toward basic and acidic residues; it reads TTIDVEAKHKS.

The protein belongs to the TatA/E family. In terms of assembly, the Tat system comprises two distinct complexes: a TatABC complex, containing multiple copies of TatA, TatB and TatC subunits, and a separate TatA complex, containing only TatA subunits. Substrates initially bind to the TatABC complex, which probably triggers association of the separate TatA complex to form the active translocon.

Its subcellular location is the cell inner membrane. Its function is as follows. Part of the twin-arginine translocation (Tat) system that transports large folded proteins containing a characteristic twin-arginine motif in their signal peptide across membranes. TatA could form the protein-conducting channel of the Tat system. This chain is Sec-independent protein translocase protein TatA, found in Acidovorax sp. (strain JS42).